We begin with the raw amino-acid sequence, 363 residues long: mRNA decay activator protein ZFP36L2-A (363 aa).

The short motif at 131-136 is the RNA-binding element; the sequence is RYKTEL. 2 consecutive C3H1-type zinc fingers follow at residues 131-159 and 169-197; these read RYKT…HGFH and KYKT…HNAE. An RNA-binding region spans residues 148 to 189; it reads YGEKCQFAHGFHELRSLTRHPKYKTELCRTFHTIGFCPYGPR. Residues 308–349 form a disordered region; sequence ESPVFDAPPSPPDSLSDRDSYLSGSLSSGSLSGSDSPTLDSN. Residues 328–347 show a composition bias toward low complexity; it reads YLSGSLSSGSLSGSDSPTLD.

Phosphorylated. As to expression, widely expressed in adults.

Its subcellular location is the nucleus. It localises to the cytoplasm. In terms of biological role, zinc-finger RNA-binding protein that destabilizes several cytoplasmic AU-rich element (ARE)-containing mRNA transcripts by promoting their poly(A) tail removal or deadenylation, and hence provide a mechanism for attenuating protein synthesis. Acts as a 3'-untranslated region (UTR) ARE mRNA-binding adapter protein to communicate signaling events to the mRNA decay machinery. Functions by recruiting the CCR4-NOT deadenylase complex and probably other components of the cytoplasmic RNA decay machinery to the bound ARE-containing mRNAs, and hence promotes ARE-mediated mRNA deadenylation and decay processes. Binds to 3'-UTR ARE of numerous mRNAs. Also induces the degradation of ARE-containing mRNAs even in absence of poly(A) tail. Required for tubulogenesis during pronephros development. This Xenopus laevis (African clawed frog) protein is mRNA decay activator protein ZFP36L2-A (zfp36l2-A).